Reading from the N-terminus, the 455-residue chain is Phosphoglucosamine/phosphogalactosamine mutase (455 aa).

The active-site Phosphoserine intermediate is Ser-97. Mg(2+) is bound by residues Ser-97, Asp-241, Asp-243, and Asp-245. Residue Ser-97 is modified to Phosphoserine.

The protein belongs to the phosphohexose mutase family. The cofactor is Mg(2+). Post-translationally, activated by phosphorylation.

The catalysed reaction is alpha-D-glucosamine 1-phosphate = D-glucosamine 6-phosphate. It carries out the reaction D-galactosamine 6-phosphate = alpha-D-galactosamine 1-phosphate. Its function is as follows. Involved in the synthesis of UDP-N-acetylglucosamine (UDP-GlcNAc) and UDP-N-acetylgalactosamine (UDP-GalNAc). Catalyzes the conversion of glucosamine-6-phosphate to glucosamine-1-phosphate and of galactosamine-6-phosphate to galactosamine-1-phosphate. The protein is Phosphoglucosamine/phosphogalactosamine mutase of Sulfurisphaera tokodaii (strain DSM 16993 / JCM 10545 / NBRC 100140 / 7) (Sulfolobus tokodaii).